Reading from the N-terminus, the 347-residue chain is Eukaryotic translation initiation factor 3 subunit I (347 aa).

WD repeat units follow at residues 8-47, 50-89, 91-135, 151-190, 193-232, and 290-329; these read GHER…RLGT, GHTG…VIHT, TAPV…VTKE, ENHK…FITS, LHTQ…QLKS, and GHFG…FDFK.

The protein belongs to the eIF-3 subunit I family. In terms of assembly, component of the eukaryotic translation initiation factor 3 (eIF-3) complex.

Its subcellular location is the cytoplasm. Functionally, component of the eukaryotic translation initiation factor 3 (eIF-3) complex, which is involved in protein synthesis of a specialized repertoire of mRNAs and, together with other initiation factors, stimulates binding of mRNA and methionyl-tRNAi to the 40S ribosome. The eIF-3 complex specifically targets and initiates translation of a subset of mRNAs involved in cell proliferation. The sequence is that of Eukaryotic translation initiation factor 3 subunit I from Vanderwaltozyma polyspora (strain ATCC 22028 / DSM 70294 / BCRC 21397 / CBS 2163 / NBRC 10782 / NRRL Y-8283 / UCD 57-17) (Kluyveromyces polysporus).